The primary structure comprises 430 residues: MGQSVVVLGAQWGDEGKGKIVDLLTEEIGAVVRFQGGHNAGHTLVINAKKTVLHLIPSGILRNGVLCLIGNGVVISPAALRKEIEELEDTGLEIRSRLKISPAAPLIMEYHIALDQAREKAAGGRAIGTTGRGIGPAYEDKVGRRGIRVADLHYPDQLAEKLRAALDYHNFVLTRYFGVDGMDFQRIYDEMLVFAEYVEPMKSDVAGILHDLRKQGKRVLFEGAQGTLLDIDHGTYPYVTSSSTTVGGALSGAGVGVQDIDYVLGIAKAYATRVGGGPFPTELDDKIGQGIRDRGVEYGASTGRPRRCGWMDIVALKRAVAINGITGLCITKLDVLDGMDKLKICIAYEYHDKRSEYAPLDAQGWEECTPVYLEFPGWNESTHGITSWEKLPPAARAYLCALEELAGCPIGIVSTGPDREHTIMLHDPFA.

GTP contacts are provided by residues 13 to 19 and 41 to 43; these read GDEGKGK and GHT. The Proton acceptor role is filled by Asp14. Mg(2+) contacts are provided by Asp14 and Gly41. IMP contacts are provided by residues 14–17, 39–42, Thr130, Arg144, Gln225, Thr240, and Arg304; these read DEGK and NAGH. Catalysis depends on His42, which acts as the Proton donor. A substrate-binding site is contributed by 300–306; it reads ASTGRPR. GTP contacts are provided by residues Arg306, 332–334, and 414–416; these read KLD and STG.

This sequence belongs to the adenylosuccinate synthetase family. In terms of assembly, homodimer. Requires Mg(2+) as cofactor.

Its subcellular location is the cytoplasm. The enzyme catalyses IMP + L-aspartate + GTP = N(6)-(1,2-dicarboxyethyl)-AMP + GDP + phosphate + 2 H(+). Its pathway is purine metabolism; AMP biosynthesis via de novo pathway; AMP from IMP: step 1/2. In terms of biological role, plays an important role in the de novo pathway of purine nucleotide biosynthesis. Catalyzes the first committed step in the biosynthesis of AMP from IMP. This chain is Adenylosuccinate synthetase, found in Xylella fastidiosa (strain M23).